The following is a 122-amino-acid chain: Large ribosomal subunit protein uL14 (122 aa).

It belongs to the universal ribosomal protein uL14 family. Part of the 50S ribosomal subunit. Forms a cluster with proteins L3 and L19. In the 70S ribosome, L14 and L19 interact and together make contacts with the 16S rRNA in bridges B5 and B8.

In terms of biological role, binds to 23S rRNA. Forms part of two intersubunit bridges in the 70S ribosome. The sequence is that of Large ribosomal subunit protein uL14 from Alkalilimnicola ehrlichii (strain ATCC BAA-1101 / DSM 17681 / MLHE-1).